Reading from the N-terminus, the 227-residue chain is uncharacterized protein (227 aa).

The next 4 membrane-spanning stretches (helical) occupy residues 17–37 (VGIK…GVFS), 79–99 (GFLF…IISI), 112–132 (LMTP…LALI), and 181–201 (VAVF…ILVF).

The protein localises to the cell membrane. This is an uncharacterized protein from Escherichia coli (strain K12).